Here is a 709-residue protein sequence, read N- to C-terminus: Transcriptional factor SWI5 (709 aa).

S225 is modified (phosphoserine). Over residues 245–264 (LSPMISPPMSNTSFTGSPSR) the composition is skewed to polar residues. The segment at 245–267 (LSPMISPPMSNTSFTGSPSRRNN) is disordered. S278 and S300 each carry phosphoserine. Residue T339 is modified to Phosphothreonine. S376 is subject to Phosphoserine. Residues 443–483 (LKPPSQQARHREGVFNDLDPNVLTKNTDNEGDDNEENEPES) form a disordered region. The span at 471–480 (NEGDDNEENE) shows a compositional bias: acidic residues. Residues S488, S492, and S505 each carry the phosphoserine modification. S522 is subject to Phosphoserine; by CDC28. 3 C2H2-type zinc fingers span residues 550 to 574 (FECL…IQTH), 580 to 604 (YSCD…KKSH), and 609 to 632 (YACP…RMIC). The Nuclear localization signal signature appears at 635-659 (GKKYENVVIKRSPRKRGRPRKDGTS). The disordered stretch occupies residues 644–677 (KRSPRKRGRPRKDGTSSVSSSPIKENINKDHNGQ). S646 is modified (phosphoserine; by CDC28). Residues 647-659 (PRKRGRPRKDGTS) constitute a DNA-binding region (a.T hook). S664 carries the post-translational modification Phosphoserine; by CDC28.

Cell cycle-dependent phosphorylation of three serine residues prevents SWI5 from entering the nucleus, and it accumulates in the cytoplasm. As a consequence of CDC28 kinase inactivation at the end of anaphase, the three serine residues are dephosphorylated and SWI5 enters the nucleus to activate transcription. It is then rapidly degraded. Threonine phosphorylation also seems to occur. In terms of processing, phosphorylated by PHO85.

Its subcellular location is the nucleus. It localises to the cytoplasm. Its function is as follows. Determines the mother-cell-specific transcription of the HO endonuclease gene that is responsible for the initiation of mating-type switching in yeast. Recognizes a specific sequence in the promoter of the HO gene. Activates EGT2 transcription in a concentration-dependent manner. Synthesized during G2 and early mitosis. The protein is Transcriptional factor SWI5 (SWI5) of Saccharomyces cerevisiae (strain ATCC 204508 / S288c) (Baker's yeast).